The sequence spans 372 residues: Cytochrome b (372 aa).

4 helical membrane-spanning segments follow: residues 25–45, 69–90, 105–125, and 170–190; these read FGSM…FLAI, WIMQ…YIHI, WLSG…GYVL, and FFAL…IHIM. The heme b site is built by His-75 and His-89. Heme b-binding residues include His-174 and His-188. His-193 is a binding site for a ubiquinone. 4 consecutive transmembrane segments (helical) span residues 218-238, 280-300, 312-332, and 339-358; these read YKDM…LSFS, LGGT…PFTH, LSQI…WTAS, and FILI…IMAP.

Belongs to the cytochrome b family. As to quaternary structure, the cytochrome bc1 complex contains 3 respiratory subunits (MT-CYB, CYC1 and UQCRFS1), 2 core proteins (UQCRC1 and UQCRC2) and probably 6 low-molecular weight proteins. Heme b serves as cofactor.

It localises to the mitochondrion inner membrane. In terms of biological role, component of the ubiquinol-cytochrome c reductase complex (complex III or cytochrome b-c1 complex) that is part of the mitochondrial respiratory chain. The b-c1 complex mediates electron transfer from ubiquinol to cytochrome c. Contributes to the generation of a proton gradient across the mitochondrial membrane that is then used for ATP synthesis. The sequence is that of Cytochrome b (MT-CYB) from Hemachatus haemachatus (Rinkhals).